The chain runs to 499 residues: UDP-N-acetylmuramoyl-L-alanyl-D-glutamate--2,6-diaminopimelate ligase (499 aa).

Position 32 (Ser32) interacts with UDP-N-acetyl-alpha-D-muramoyl-L-alanyl-D-glutamate. 117–123 contributes to the ATP binding site; the sequence is GTNGKTT. Residues 159 to 160, Ser186, Gln192, and Arg194 contribute to the UDP-N-acetyl-alpha-D-muramoyl-L-alanyl-D-glutamate site; that span reads TT. Lys226 carries the N6-carboxylysine modification. Meso-2,6-diaminopimelate is bound by residues Arg394, 418-421, Gly469, and Glu473; that span reads DNPR. Residues 418-421 carry the Meso-diaminopimelate recognition motif motif; it reads DNPR.

This sequence belongs to the MurCDEF family. MurE subfamily. Mg(2+) serves as cofactor. In terms of processing, carboxylation is probably crucial for Mg(2+) binding and, consequently, for the gamma-phosphate positioning of ATP.

It localises to the cytoplasm. It carries out the reaction UDP-N-acetyl-alpha-D-muramoyl-L-alanyl-D-glutamate + meso-2,6-diaminopimelate + ATP = UDP-N-acetyl-alpha-D-muramoyl-L-alanyl-gamma-D-glutamyl-meso-2,6-diaminopimelate + ADP + phosphate + H(+). The protein operates within cell wall biogenesis; peptidoglycan biosynthesis. Functionally, catalyzes the addition of meso-diaminopimelic acid to the nucleotide precursor UDP-N-acetylmuramoyl-L-alanyl-D-glutamate (UMAG) in the biosynthesis of bacterial cell-wall peptidoglycan. This Synechococcus sp. (strain WH7803) protein is UDP-N-acetylmuramoyl-L-alanyl-D-glutamate--2,6-diaminopimelate ligase.